The primary structure comprises 278 residues: S-formylglutathione hydrolase YeiG (278 aa).

Active-site charge relay system residues include serine 145, aspartate 223, and histidine 256.

The protein belongs to the esterase D family.

It catalyses the reaction S-formylglutathione + H2O = formate + glutathione + H(+). Its function is as follows. Serine hydrolase involved in the detoxification of formaldehyde. Hydrolyzes S-formylglutathione to glutathione and formate. This chain is S-formylglutathione hydrolase YeiG (yeiG), found in Shigella boydii serotype 4 (strain Sb227).